A 65-amino-acid polypeptide reads, in one-letter code: Alpha-conotoxin BnIA (65 aa).

A signal peptide spans 1–21; sequence MGMRMMFTMFLLVVLATTVVS. Positions 22 to 48 are excised as a propeptide; sequence FASDRASDGRNAAAKDKASDLVALTVK. 2 disulfides stabilise this stretch: Cys-50/Cys-56 and Cys-51/Cys-64. Residues 52–54 form a ser-Xaa-Pro motif, crucial for potent interaction with nAChR region; the sequence is SHP. Cys-64 carries the cysteine amide modification.

It belongs to the conotoxin A superfamily. As to expression, expressed by the venom duct.

It localises to the secreted. In terms of biological role, alpha-conotoxins act on postsynaptic membranes, they bind to the nicotinic acetylcholine receptors (nAChR) and thus inhibit them. This toxin inhibits acetylcholine-evoked currents reversibly in oocytes expressing the human alpha-7/CHRNA7 nAChR, and blocks nerve-evoked skeletal muscle contractions in isolated mouse neuromuscular preparations, but with a very low affinity. The chain is Alpha-conotoxin BnIA from Conus bandanus (Banded marble cone).